Reading from the N-terminus, the 360-residue chain is tRNA N6-adenosine threonylcarbamoyltransferase (360 aa).

Residues His111 and His115 each coordinate Fe cation. Substrate contacts are provided by residues 134–138 (LVSGG), Asp167, Gly180, Asp184, and Asn279. A Fe cation-binding site is contributed by Asp307.

This sequence belongs to the KAE1 / TsaD family. It depends on Fe(2+) as a cofactor.

It is found in the cytoplasm. The catalysed reaction is L-threonylcarbamoyladenylate + adenosine(37) in tRNA = N(6)-L-threonylcarbamoyladenosine(37) in tRNA + AMP + H(+). Functionally, required for the formation of a threonylcarbamoyl group on adenosine at position 37 (t(6)A37) in tRNAs that read codons beginning with adenine. Is involved in the transfer of the threonylcarbamoyl moiety of threonylcarbamoyl-AMP (TC-AMP) to the N6 group of A37, together with TsaE and TsaB. TsaD likely plays a direct catalytic role in this reaction. The polypeptide is tRNA N6-adenosine threonylcarbamoyltransferase (Acaryochloris marina (strain MBIC 11017)).